Consider the following 339-residue polypeptide: Phosphoribosylformylglycinamidine cyclo-ligase (339 aa).

It belongs to the AIR synthase family.

The protein localises to the cytoplasm. It carries out the reaction 2-formamido-N(1)-(5-O-phospho-beta-D-ribosyl)acetamidine + ATP = 5-amino-1-(5-phospho-beta-D-ribosyl)imidazole + ADP + phosphate + H(+). The protein operates within purine metabolism; IMP biosynthesis via de novo pathway; 5-amino-1-(5-phospho-D-ribosyl)imidazole from N(2)-formyl-N(1)-(5-phospho-D-ribosyl)glycinamide: step 2/2. This Fusobacterium nucleatum subsp. nucleatum (strain ATCC 25586 / DSM 15643 / BCRC 10681 / CIP 101130 / JCM 8532 / KCTC 2640 / LMG 13131 / VPI 4355) protein is Phosphoribosylformylglycinamidine cyclo-ligase.